The sequence spans 353 residues: Probable D-xylulose reductase A (353 aa).

The Zn(2+) site is built by Cys-42, His-67, and Glu-68. An NAD(+)-binding site is contributed by 177 to 182 (GAGPVG).

The protein belongs to the zinc-containing alcohol dehydrogenase family. The cofactor is Zn(2+).

It catalyses the reaction xylitol + NAD(+) = D-xylulose + NADH + H(+). It functions in the pathway carbohydrate degradation; L-arabinose degradation via L-arabinitol; D-xylulose 5-phosphate from L-arabinose (fungal route): step 4/5. Xylitol dehydrogenase which catalyzes the conversion of xylitol to D-xylulose. Xylose is a major component of hemicelluloses such as xylan. Most fungi utilize D-xylose via three enzymatic reactions, xylose reductase (XR), xylitol dehydrogenase (XDH), and xylulokinase, to form xylulose 5-phosphate, which enters pentose phosphate pathway. The protein is Probable D-xylulose reductase A (xdhA) of Aspergillus terreus (strain NIH 2624 / FGSC A1156).